A 239-amino-acid chain; its full sequence is Ditrans,polycis-undecaprenyl-diphosphate synthase ((2E,6E)-farnesyl-diphosphate specific) (239 aa).

The active site involves Asp18. Asp18 contacts Mg(2+). Residues Gly19 to Arg22, Trp23, Arg31, His35, and Ser63 to Glu65 each bind substrate. Asn66 functions as the Proton acceptor in the catalytic mechanism. Substrate is bound by residues Trp67, Arg69, Arg186, and Arg192–Ser194. Glu205 is a Mg(2+) binding site.

Belongs to the UPP synthase family. As to quaternary structure, homodimer. Requires Mg(2+) as cofactor.

The catalysed reaction is 8 isopentenyl diphosphate + (2E,6E)-farnesyl diphosphate = di-trans,octa-cis-undecaprenyl diphosphate + 8 diphosphate. Its function is as follows. Catalyzes the sequential condensation of isopentenyl diphosphate (IPP) with (2E,6E)-farnesyl diphosphate (E,E-FPP) to yield (2Z,6Z,10Z,14Z,18Z,22Z,26Z,30Z,34E,38E)-undecaprenyl diphosphate (di-trans,octa-cis-UPP). UPP is the precursor of glycosyl carrier lipid in the biosynthesis of bacterial cell wall polysaccharide components such as peptidoglycan and lipopolysaccharide. In Haemophilus influenzae (strain ATCC 51907 / DSM 11121 / KW20 / Rd), this protein is Ditrans,polycis-undecaprenyl-diphosphate synthase ((2E,6E)-farnesyl-diphosphate specific).